Consider the following 29-residue polypeptide: Cyclotide mden-C (29 aa).

The segment at residues 1–29 (GKPICGETCFKGKCYTPGCTCSYPVCKKN) is a cross-link (cyclopeptide (Gly-Asn)). Disulfide bonds link Cys-5/Cys-19, Cys-9/Cys-21, and Cys-14/Cys-26.

This sequence belongs to the cyclotide family. In terms of processing, this is a cyclic peptide.

In terms of biological role, probably participates in a plant defense mechanism. The polypeptide is Cyclotide mden-C (Melicytus dentatus (Tree violet)).